The chain runs to 270 residues: NADPH-dependent 7-cyano-7-deazaguanine reductase (270 aa).

79–81 serves as a coordination point for substrate; that stretch reads IES. Residue 81–82 participates in NADPH binding; that stretch reads SK. Cys-177 acts as the Thioimide intermediate in catalysis. Asp-184 serves as the catalytic Proton donor. 216 to 217 is a substrate binding site; that stretch reads HE. 245 to 246 is an NADPH binding site; the sequence is RG.

Belongs to the GTP cyclohydrolase I family. QueF type 2 subfamily. Homodimer.

The protein resides in the cytoplasm. It catalyses the reaction 7-aminomethyl-7-carbaguanine + 2 NADP(+) = 7-cyano-7-deazaguanine + 2 NADPH + 3 H(+). Its pathway is tRNA modification; tRNA-queuosine biosynthesis. In terms of biological role, catalyzes the NADPH-dependent reduction of 7-cyano-7-deazaguanine (preQ0) to 7-aminomethyl-7-deazaguanine (preQ1). The chain is NADPH-dependent 7-cyano-7-deazaguanine reductase from Acinetobacter baumannii (strain SDF).